Consider the following 305-residue polypeptide: Translation initiation factor eIF2B subunit alpha (305 aa).

K35 carries the post-translational modification N6-acetyllysine.

Belongs to the eIF-2B alpha/beta/delta subunits family. Component of the translation initiation factor 2B (eIF2B) complex which is a heterodecamer of two sets of five different subunits: alpha, beta, gamma, delta and epsilon. Subunits alpha, beta and delta comprise a regulatory subcomplex and subunits epsilon and gamma comprise a catalytic subcomplex. Within the complex, the hexameric regulatory complex resides at the center, with the two heterodimeric catalytic subcomplexes bound on opposite sides.

It is found in the cytoplasm. The protein resides in the cytosol. With respect to regulation, activated by the chemical integrated stress response (ISR) inhibitor ISRIB which stimulates guanine nucleotide exchange factor activity for both phosphorylated and unphosphorylated eIF2. In terms of biological role, acts as a component of the translation initiation factor 2B (eIF2B) complex, which catalyzes the exchange of GDP for GTP on eukaryotic initiation factor 2 (eIF2) gamma subunit. Its guanine nucleotide exchange factor activity is repressed when bound to eIF2 complex phosphorylated on the alpha subunit, thereby limiting the amount of methionyl-initiator methionine tRNA available to the ribosome and consequently global translation is repressed. This Macaca fascicularis (Crab-eating macaque) protein is Translation initiation factor eIF2B subunit alpha (EIF2B1).